Reading from the N-terminus, the 147-residue chain is Large ribosomal subunit protein uL11 (147 aa).

The protein belongs to the universal ribosomal protein uL11 family. In terms of assembly, part of the ribosomal stalk of the 50S ribosomal subunit. Interacts with L10 and the large rRNA to form the base of the stalk. L10 forms an elongated spine to which L12 dimers bind in a sequential fashion forming a multimeric L10(L12)X complex. One or more lysine residues are methylated.

In terms of biological role, forms part of the ribosomal stalk which helps the ribosome interact with GTP-bound translation factors. This Metamycoplasma arthritidis (strain 158L3-1) (Mycoplasma arthritidis) protein is Large ribosomal subunit protein uL11.